The chain runs to 780 residues: ATP-dependent DNA helicase RecG (780 aa).

Domain stretches follow at residues 1–350 (MLCS…GGIP), 351–549 (KKIE…EMPP), and 550–780 (GRKE…IEVG). The tract at residues 154–252 (RKIFKLNDLL…VTPKEGEYVR (99 aa)) is wedge domain. Residues Phe367, Leu369, Gly399, Ser400, Gly401, Lys402, Thr403, and Arg436 each contribute to the ATP site. Residues 383–544 (DMISEKPMNR…FYGDLDVTVI (162 aa)) form the Helicase ATP-binding domain. Positions 497–500 (DEQH) match the DEAH box motif. Residues 563–728 (RVNEVYEFVR…EYDLKTRGPG (166 aa)) form the Helicase C-terminal domain.

The protein belongs to the helicase family. RecG subfamily. As to quaternary structure, monomer.

It catalyses the reaction Couples ATP hydrolysis with the unwinding of duplex DNA by translocating in the 3'-5' direction.. It carries out the reaction ATP + H2O = ADP + phosphate + H(+). Functionally, plays a critical role in recombination and DNA repair. Helps process Holliday junction intermediates to mature products by catalyzing branch migration. Has replication fork (Y-DNA) regression activity, unwinds stalled or blocked replication forks to make a HJ that can be resolved. Has a DNA unwinding activity characteristic of a DNA helicase with 3'-5' polarity. Might be a DNA translocase rather than a bona fide helicase. The protein is ATP-dependent DNA helicase RecG of Thermotoga maritima (strain ATCC 43589 / DSM 3109 / JCM 10099 / NBRC 100826 / MSB8).